The primary structure comprises 473 residues: UDP-N-acetylmuramate--L-alanine ligase (473 aa).

Residue 112–118 coordinates ATP; sequence GTHGKTT.

Belongs to the MurCDEF family.

The protein localises to the cytoplasm. It catalyses the reaction UDP-N-acetyl-alpha-D-muramate + L-alanine + ATP = UDP-N-acetyl-alpha-D-muramoyl-L-alanine + ADP + phosphate + H(+). Its pathway is cell wall biogenesis; peptidoglycan biosynthesis. Its function is as follows. Cell wall formation. The chain is UDP-N-acetylmuramate--L-alanine ligase from Nitrosomonas eutropha (strain DSM 101675 / C91 / Nm57).